Here is a 156-residue protein sequence, read N- to C-terminus: 6,7-dimethyl-8-ribityllumazine synthase (156 aa).

Residues phenylalanine 23, 57-59, and 81-83 contribute to the 5-amino-6-(D-ribitylamino)uracil site; these read AFE and AVI. 86-87 provides a ligand contact to (2S)-2-hydroxy-3-oxobutyl phosphate; that stretch reads AT. Histidine 89 serves as the catalytic Proton donor. 5-amino-6-(D-ribitylamino)uracil is bound at residue phenylalanine 114. Residue arginine 128 coordinates (2S)-2-hydroxy-3-oxobutyl phosphate.

It belongs to the DMRL synthase family.

It carries out the reaction (2S)-2-hydroxy-3-oxobutyl phosphate + 5-amino-6-(D-ribitylamino)uracil = 6,7-dimethyl-8-(1-D-ribityl)lumazine + phosphate + 2 H2O + H(+). Its pathway is cofactor biosynthesis; riboflavin biosynthesis; riboflavin from 2-hydroxy-3-oxobutyl phosphate and 5-amino-6-(D-ribitylamino)uracil: step 1/2. Catalyzes the formation of 6,7-dimethyl-8-ribityllumazine by condensation of 5-amino-6-(D-ribitylamino)uracil with 3,4-dihydroxy-2-butanone 4-phosphate. This is the penultimate step in the biosynthesis of riboflavin. The chain is 6,7-dimethyl-8-ribityllumazine synthase from Sulfurovum sp. (strain NBC37-1).